Consider the following 410-residue polypeptide: Arginine deiminase (410 aa).

Cysteine 399 (amidino-cysteine intermediate) is an active-site residue.

Belongs to the arginine deiminase family.

Its subcellular location is the cytoplasm. It carries out the reaction L-arginine + H2O = L-citrulline + NH4(+). Its pathway is amino-acid degradation; L-arginine degradation via ADI pathway; carbamoyl phosphate from L-arginine: step 1/2. This chain is Arginine deiminase, found in Listeria monocytogenes serotype 4a (strain HCC23).